The sequence spans 162 residues: uncharacterized protein (162 aa).

This is an uncharacterized protein from Salmonella typhi.